The following is a 907-amino-acid chain: Protein translocase subunit SecA (907 aa).

ATP-binding positions include Gln87, Gly105 to Thr109, and Asp512. The tract at residues Gln834–Ile907 is disordered. Composition is skewed to basic and acidic residues over residues Asp836–Arg853 and Glu873–Arg888. Positions 892, 894, 903, and 904 each coordinate Zn(2+). Residues Lys898–Ile907 are compositionally biased toward basic residues.

The protein belongs to the SecA family. As to quaternary structure, monomer and homodimer. Part of the essential Sec protein translocation apparatus which comprises SecA, SecYEG and auxiliary proteins SecDF-YajC and YidC. It depends on Zn(2+) as a cofactor.

It is found in the cell inner membrane. It localises to the cytoplasm. The enzyme catalyses ATP + H2O + cellular proteinSide 1 = ADP + phosphate + cellular proteinSide 2.. In terms of biological role, part of the Sec protein translocase complex. Interacts with the SecYEG preprotein conducting channel. Has a central role in coupling the hydrolysis of ATP to the transfer of proteins into and across the cell membrane, serving both as a receptor for the preprotein-SecB complex and as an ATP-driven molecular motor driving the stepwise translocation of polypeptide chains across the membrane. The polypeptide is Protein translocase subunit SecA (Aliivibrio fischeri (strain ATCC 700601 / ES114) (Vibrio fischeri)).